The following is a 416-amino-acid chain: GTPase Obg (416 aa).

Residues 1 to 157 enclose the Obg domain; the sequence is MFQDVLVITV…RRLRLELMLI (157 aa). Disordered regions lie at residues 25–44 and 62–82; these read EKFVPKGGPDGGDGGRGGSV and TYKAEDGEHGRGSQQHGRGGE. A compositionally biased stretch (gly residues) spans 32-42; sequence GPDGGDGGRGG. Positions 63 to 72 are enriched in basic and acidic residues; it reads YKAEDGEHGR. In terms of domain architecture, OBG-type G spans 158–324; the sequence is ADVGLVGYPN…LKEALHALVR (167 aa). GTP-binding positions include 164 to 171, 189 to 193, 211 to 214, 277 to 280, and 305 to 307; these read GYPNAGKS, FTTLS, DIPG, NKVD, and SAL. Residues Ser171 and Thr191 each contribute to the Mg(2+) site. The OCT domain occupies 336–414; the sequence is PRKEVQAGVE…IGGLEFEYIP (79 aa).

This sequence belongs to the TRAFAC class OBG-HflX-like GTPase superfamily. OBG GTPase family. Monomer. The cofactor is Mg(2+).

The protein localises to the cytoplasm. In terms of biological role, an essential GTPase which binds GTP, GDP and possibly (p)ppGpp with moderate affinity, with high nucleotide exchange rates and a fairly low GTP hydrolysis rate. Plays a role in control of the cell cycle, stress response, ribosome biogenesis and in those bacteria that undergo differentiation, in morphogenesis control. In Thermus thermophilus (strain ATCC 27634 / DSM 579 / HB8), this protein is GTPase Obg.